A 285-amino-acid chain; its full sequence is 1-acyl-sn-glycerol-3-phosphate acyltransferase alpha (285 aa).

The signal sequence occupies residues methionine 1–serine 28. Over alanine 29–lysine 34 the chain is Lumenal. Residues methionine 35–valine 55 form a helical membrane-spanning segment. Topologically, residues arginine 56–arginine 124 are cytoplasmic. Residues histidine 101 to aspartate 106 carry the HXXXXD motif motif. The helical transmembrane segment at glutamate 125–aspartate 145 threads the bilayer. Topologically, residues arginine 146 to arginine 189 are lumenal. Positions glutamate 175–arginine 178 match the EGTR motif motif.

The protein belongs to the 1-acyl-sn-glycerol-3-phosphate acyltransferase family. As to expression, widely expressed.

The protein resides in the endoplasmic reticulum membrane. It catalyses the reaction a 1-acyl-sn-glycero-3-phosphate + an acyl-CoA = a 1,2-diacyl-sn-glycero-3-phosphate + CoA. It carries out the reaction 1-(9Z-octadecenoyl)-sn-glycero-3-phosphate + (9Z)-octadecenoyl-CoA = 1,2-di-(9Z-octadecenoyl)-sn-glycero-3-phosphate + CoA. The enzyme catalyses 1-(9Z-octadecenoyl)-sn-glycero-3-phosphate + hexadecanoyl-CoA = 1-(9Z)-octadecenoyl-2-hexadecanoyl-sn-glycero-3-phosphate + CoA. The catalysed reaction is heptadecanoyl-CoA + 1-(9Z-octadecenoyl)-sn-glycero-3-phosphate = 1-(9Z)-octadecenoyl-2-heptadecanoyl-sn-glycero-3-phosphate + CoA. It catalyses the reaction 1-(9Z-octadecenoyl)-sn-glycero-3-phosphate + octadecanoyl-CoA = 1-(9Z-octadecenoyl)-2-octadecanoyl-sn-glycero-3-phosphate + CoA. It carries out the reaction 1-(9Z-octadecenoyl)-sn-glycero-3-phosphate + (9Z,12Z)-octadecadienoyl-CoA = 1-(9Z)-octadecenoyl-2-(9Z,12Z)-octadecadienoyl-sn-glycero-3-phosphate + CoA. The enzyme catalyses 1-(9Z-octadecenoyl)-sn-glycero-3-phosphate + tetradecanoyl-CoA = 1-(9Z)-octadecenoyl-2-tetradecanoyl-sn-glycero-3-phosphate + CoA. The catalysed reaction is pentadecanoyl-CoA + 1-(9Z-octadecenoyl)-sn-glycero-3-phosphate = 1-(9Z)-octadecenoyl-2-pentadecanoyl-sn-glycero-3-phosphate + CoA. It catalyses the reaction 1-hexadecanoyl-sn-glycero-3-phosphate + (9Z)-octadecenoyl-CoA = 1-hexadecanoyl-2-(9Z-octadecenoyl)-sn-glycero-3-phosphate + CoA. It carries out the reaction 1-(9Z,12Z,15Z)-octadecatrienoyl-sn-glycero-3-phosphate + (9Z)-octadecenoyl-CoA = 1-(9Z,12Z,15Z)-octadecatrienoyl-2-(9Z)-octadecenoyl-sn-glycero-3-phosphate + CoA. The enzyme catalyses 1-(6Z,9Z,12Z-octadecatrienoyl)-sn-glycero-3-phosphate + (9Z)-octadecenoyl-CoA = (6Z,9Z,12Z)-octadecatrienoyl-2-(9Z)-octadecenoyl-sn-glycero-3-phosphate + CoA. The catalysed reaction is 1-eicosanoyl-sn-glycero-3-phosphate + (9Z)-octadecenoyl-CoA = 1-eicosanoyl-2-(9Z)-octadecenoyl-sn-glycero-3-phosphate + CoA. It catalyses the reaction 1-tetradecanoyl-sn-glycerol 3-phosphate + (9Z)-octadecenoyl-CoA = 1-tetradecanoyl-2-(9Z)-octadecenoyl-sn-glycero-3-phosphate + CoA. It carries out the reaction 1-(9Z-octadecenoyl)-sn-glycero-3-phosphate + (5Z,8Z,11Z,14Z)-eicosatetraenoyl-CoA = 1-(9Z)-octadecenoyl-2-(5Z,8Z,11Z,14Z)-eicosatetraenoyl-sn-glycero-3-phosphate + CoA. The enzyme catalyses 1-(9Z-octadecenoyl)-sn-glycero-3-phosphate + dodecanoyl-CoA = 1-(9Z)-octadecenoyl-2-dodecanoyl-sn-glycero-3-phosphate + CoA. The catalysed reaction is (6Z)-octadecenoyl-CoA + 1-(9Z-octadecenoyl)-sn-glycero-3-phosphate = 1-(9Z)-octadecenoyl-2-(6Z)-octadecenoyl-sn-glycero-3-phosphate + CoA. It catalyses the reaction (11Z)-octadecenoyl-CoA + 1-(9Z-octadecenoyl)-sn-glycero-3-phosphate = 1-(9Z)-octadecenoyl-2-(11Z)-octadecenoyl-sn-glycero-3-phosphate + CoA. It carries out the reaction (9Z)-hexadecenoyl-CoA + 1-(9Z-octadecenoyl)-sn-glycero-3-phosphate = 1-(9Z-octadecenoyl)-2-(9Z-hexadecenoyl)-sn-glycero-3-phosphate + CoA. The protein operates within phospholipid metabolism; CDP-diacylglycerol biosynthesis; CDP-diacylglycerol from sn-glycerol 3-phosphate: step 2/3. In terms of biological role, converts 1-acyl-sn-glycerol-3-phosphate (lysophosphatidic acid or LPA) into 1,2-diacyl-sn-glycerol-3-phosphate (phosphatidic acid or PA) by incorporating an acyl moiety at the sn-2 position of the glycerol backbone. In Mus musculus (Mouse), this protein is 1-acyl-sn-glycerol-3-phosphate acyltransferase alpha (Agpat1).